Reading from the N-terminus, the 278-residue chain is NAD-capped RNA hydrolase NudC (278 aa).

Arg84 contacts substrate. Residues Cys114 and Cys117 each contribute to the Zn(2+) site. Residue Glu127 coordinates substrate. Cys132 provides a ligand contact to Zn(2+). Tyr140 lines the substrate pocket. A Nudix hydrolase domain is found at 141-264; the sequence is PRISPSMIVL…SIARYLIEAY (124 aa). 3 residues coordinate a divalent metal cation: Ala174, Glu190, and Glu194. Positions 175 to 196 match the Nudix box motif; it reads GFVEPGESAEDCVHREVMEEVQ. Position 208-215 (208-215) interacts with substrate; sequence QCWPFPHS. A divalent metal cation is bound at residue Glu235. A substrate-binding site is contributed by Ala257.

The protein belongs to the Nudix hydrolase family. NudC subfamily. As to quaternary structure, homodimer. Mg(2+) is required as a cofactor. It depends on Mn(2+) as a cofactor. Zn(2+) serves as cofactor.

It carries out the reaction a 5'-end NAD(+)-phospho-ribonucleoside in mRNA + H2O = a 5'-end phospho-adenosine-phospho-ribonucleoside in mRNA + beta-nicotinamide D-ribonucleotide + 2 H(+). It catalyses the reaction NAD(+) + H2O = beta-nicotinamide D-ribonucleotide + AMP + 2 H(+). The catalysed reaction is NADH + H2O = reduced beta-nicotinamide D-ribonucleotide + AMP + 2 H(+). Functionally, mRNA decapping enzyme that specifically removes the nicotinamide adenine dinucleotide (NAD) cap from a subset of mRNAs by hydrolyzing the diphosphate linkage to produce nicotinamide mononucleotide (NMN) and 5' monophosphate mRNA. The NAD-cap is present at the 5'-end of some mRNAs and stabilizes RNA against 5'-processing. Has preference for mRNAs with a 5'-end purine. Catalyzes the hydrolysis of a broad range of dinucleotide pyrophosphates. The protein is NAD-capped RNA hydrolase NudC of Pseudomonas syringae pv. syringae (strain B728a).